A 302-amino-acid chain; its full sequence is Urease accessory protein UreG (302 aa).

Composition is skewed to basic and acidic residues over residues 1 to 32 (MHDPGEHGHGRHDHDHDHDHVHDHDHDHDHVH), 40 to 56 (HEHEHAHEHAHGHEHGH), and 64 to 76 (HAHEHAHGHTHEH). The interval 1 to 76 (MHDPGEHGHG…EHAHGHTHEH (76 aa)) is disordered. Residue 105-112 (GPVGSGKT) participates in GTP binding.

Belongs to the SIMIBI class G3E GTPase family. UreG subfamily. As to quaternary structure, homodimer. UreD, UreF and UreG form a complex that acts as a GTP-hydrolysis-dependent molecular chaperone, activating the urease apoprotein by helping to assemble the nickel containing metallocenter of UreC. The UreE protein probably delivers the nickel.

It localises to the cytoplasm. In terms of biological role, facilitates the functional incorporation of the urease nickel metallocenter. This process requires GTP hydrolysis, probably effectuated by UreG. This Sorangium cellulosum (strain So ce56) (Polyangium cellulosum (strain So ce56)) protein is Urease accessory protein UreG.